A 615-amino-acid polypeptide reads, in one-letter code: MPQLQYPECYLAPNRCLVSNCGVNKMSNEELVGQNHGMEGEACTGEDVTFSDVAIDFSHEEWGWLNSAQRDLYKDVMVQNYENLVSVAGLSVTKPHVITLLEDGKEPWMMEKKLSKGLIPDWESRWENKELSTKKDIYDEDSPQTVIIEKVVKQSYEFSNSKMNLEYTEKLEGKHGSQVDHFRPAILTSRESPIADSVYKYNIFRSTFHSKSTLSEPQKISAEGNSYKYDILKKNLPKKSVIKNEKVNGGKKLLNSNKSGAAFSQGKSLALPQTCNREKIYTCSECGKAFGKQSILNRHWRIHTGEKPYECRECGKTFSHGSSLTRHLISHSGEKPYKCIECGKAFSHVSSLTNHQSTHTGEKPYECMNCGKSFSRVSHLIEHLRIHTQEKLYECRICGKAFIHRSSLIHHQKIHTGEKPYECRECGKAFCCSSHLTRHQRIHTMEKQYECNKCLKVFSSLSFLVQHQSIHTEEKPFECQKCRKSFNQLESLNMHLRNHIRLKPYECSICGKAFSHRSSLLQHHRIHTGEKPYECIKCGKTFSCSSNLTVHQRIHTGEKPYKCNECGKAFSKGSNLTAHQRVHNGEKPNSVVSVEKPLDHMNHYTCEKSYRRETI.

In terms of domain architecture, KRAB spans 48 to 120; it reads VTFSDVAIDF…EKKLSKGLIP (73 aa). Glycyl lysine isopeptide (Lys-Gly) (interchain with G-Cter in SUMO2) cross-links involve residues Lys-153 and Lys-170. C2H2-type zinc fingers lie at residues 281–303, 309–331, 337–359, 365–387, 393–415, 421–443, 449–471, 477–499, 505–527, 533–555, and 561–583; these read YTCS…WRIH, YECR…LISH, YKCI…QSTH, YECM…LRIH, YECR…QKIH, YECR…QRIH, YECN…QSIH, FECQ…LRNH, YECS…HRIH, YECI…QRIH, and YKCN…QRVH.

The protein belongs to the krueppel C2H2-type zinc-finger protein family.

Its subcellular location is the nucleus. May be involved in transcriptional regulation. The protein is Zinc finger protein 181 (ZNF181) of Pongo abelii (Sumatran orangutan).